Consider the following 171-residue polypeptide: Large ribosomal subunit protein bL9 (171 aa).

Belongs to the bacterial ribosomal protein bL9 family.

In terms of biological role, binds to the 23S rRNA. The chain is Large ribosomal subunit protein bL9 from Rickettsia typhi (strain ATCC VR-144 / Wilmington).